A 754-amino-acid polypeptide reads, in one-letter code: C2H2 finger domain transcription factor crzA (754 aa).

Disordered regions lie at residues 1-51 (MASQ…TVTG), 63-150 (SFAN…FSDL), 187-227 (VHQQ…QGST), 269-299 (QGHRRAPSEVSEISSAAPSPYLSQHESFDGV), and 384-543 (GAEG…RVQK). Low complexity predominate over residues 30 to 44 (HQQQQQQQHQQHQGQ). Composition is skewed to polar residues over residues 63-80 (SFANSSFDPNSNNVSPSA) and 94-114 (TPASQTDQNYANSLQIPQSYG). Residues 130–140 (QQQSQQQHHQQ) show a composition bias toward low complexity. Polar residues predominate over residues 141-150 (PSLDDNFSDL). Residues 189–209 (QQSHPTQIPSSHSSTSPQISP) show a composition bias toward low complexity. 2 stretches are compositionally biased toward polar residues: residues 210–227 (LEQQQHSSPGPMSTQGST) and 279–293 (SEISSAAPSPYLSQH). Composition is skewed to low complexity over residues 459-472 (STSRLRSSSTSSSL) and 491-515 (RQQQSNPSSRDPSPSRSNRRLSTSS). 2 C2H2-type zinc fingers span residues 548–570 (FQCNLCPKRFTRAYNLRSHLRTH) and 576–598 (FVCTVCGKAFARQHDRKRHEGLH). A C2H2-type 3; degenerate zinc finger spans residues 604–635 (FVCQGELSRGGQWGCGRRFARADALGRHFRSE). The disordered stretch occupies residues 708 to 737 (ADDPSDIGGRSSFDASSGNEFGFEDDDSGL).

It localises to the nucleus. It is found in the cytoplasm. Its function is as follows. Transcription factor involved in the regulation of calcium ion homeostasis. Regulates genes encoding calcium transporters, transcription factors and genes that could be directly or indirectly involved in calcium metabolism. Supports especially pmcA, pmcB and pmcC expression encoding for calcium-translocating P-type ATPases. Binds target promoters at motif A[GT][CG]CA[AC][AG]. Plays an essential role germination, radial growth, and asexual development. Also plays a major role in proper chitin and glucan incorporation into the cell wall. Involved in the high-osmolarity glycerol response (HOG) signaling pathway. Required for pathogenicity in an experimental murine model of invasive pulmonary aspergillosis. The chain is C2H2 finger domain transcription factor crzA from Aspergillus fumigatus (strain ATCC MYA-4609 / CBS 101355 / FGSC A1100 / Af293) (Neosartorya fumigata).